The primary structure comprises 247 residues: Ribonuclease 3 (247 aa).

The RNase III domain occupies 5–147 (LIALQERLQH…LIGAVYLDAG (143 aa)). Mg(2+) is bound at residue E40. D44 is an active-site residue. Residues 104–124 (QRRSRRRCADELQPDEAGSGG) form a disordered region. Positions 133 and 136 each coordinate Mg(2+). E136 is an active-site residue. The 71-residue stretch at 174-244 (DAKTALQEWL…AAAMLATLKA (71 aa)) folds into the DRBM domain.

It belongs to the ribonuclease III family. In terms of assembly, homodimer. It depends on Mg(2+) as a cofactor.

It is found in the cytoplasm. The catalysed reaction is Endonucleolytic cleavage to 5'-phosphomonoester.. Digests double-stranded RNA. Involved in the processing of primary rRNA transcript to yield the immediate precursors to the large and small rRNAs (23S and 16S). Processes some mRNAs, and tRNAs when they are encoded in the rRNA operon. Processes pre-crRNA and tracrRNA of type II CRISPR loci if present in the organism. This chain is Ribonuclease 3, found in Verminephrobacter eiseniae (strain EF01-2).